The primary structure comprises 188 residues: MYMQVESRTGTLLHLKRNPSIRSWSLLVGILSVGLAAAYYSTDTWLWKLFYVAGCAFVALQNLEDWEEAVFDKKSGKAILTTYSIYKKLLTLCKGGQDQVVVLLKEIRDVNVAEERVRYFGKGYVIVLRFVTGISHPLTQSAVLGARSDVEAVAKELTKFLELDLVRTRSQAVEESSDSESDGALDKQ.

The helical transmembrane segment at 20 to 42 threads the bilayer; the sequence is SIRSWSLLVGILSVGLAAAYYST.

Belongs to the CYBC1 family.

Its subcellular location is the endoplasmic reticulum membrane. Functionally, functions as a chaperone necessary for a stable expression of the CYBA and CYBB subunits of the cytochrome b-245 heterodimer. The sequence is that of Cytochrome b-245 chaperone 1 homolog (cybc1) from Xenopus laevis (African clawed frog).